The sequence spans 337 residues: Inositol 2-dehydrogenase (337 aa).

It belongs to the Gfo/Idh/MocA family. Homotetramer.

It catalyses the reaction myo-inositol + NAD(+) = scyllo-inosose + NADH + H(+). In terms of biological role, involved in the oxidation of myo-inositol (MI) to 2-keto-myo-inositol (2KMI or 2-inosose). The chain is Inositol 2-dehydrogenase from Serratia proteamaculans (strain 568).